A 131-amino-acid polypeptide reads, in one-letter code: Aspartate 1-decarboxylase (131 aa).

The active-site Schiff-base intermediate with substrate; via pyruvic acid is Ser25. Residue Ser25 is modified to Pyruvic acid (Ser). A substrate-binding site is contributed by Thr57. The Proton donor role is filled by Tyr58. Residue 73-75 (GAA) participates in substrate binding.

Belongs to the PanD family. As to quaternary structure, heterooctamer of four alpha and four beta subunits. Pyruvate is required as a cofactor. Post-translationally, is synthesized initially as an inactive proenzyme, which is activated by self-cleavage at a specific serine bond to produce a beta-subunit with a hydroxyl group at its C-terminus and an alpha-subunit with a pyruvoyl group at its N-terminus.

The protein localises to the cytoplasm. The enzyme catalyses L-aspartate + H(+) = beta-alanine + CO2. It functions in the pathway cofactor biosynthesis; (R)-pantothenate biosynthesis; beta-alanine from L-aspartate: step 1/1. Functionally, catalyzes the pyruvoyl-dependent decarboxylation of aspartate to produce beta-alanine. The sequence is that of Aspartate 1-decarboxylase from Anaeromyxobacter dehalogenans (strain 2CP-C).